Reading from the N-terminus, the 186-residue chain is MYRYIKGIVTQINPQHIVVENNGVGYLVLSPVPYQYKIGEETTVVTYLHVREDIFQLYGFKDEETLNLFLKLISVSGIGPKSAMSIVAFDDTNKIIAAIETSDAKYLTKFPGIGMKSAQQIILDLKGKLVNDELDMQLLSDNSKDVAAALEALGYNKKEIAKSLKHVNFDQDLNKALKEALAILLK.

Residues 1-61 are domain I; sequence MYRYIKGIVT…EDIFQLYGFK (61 aa). The domain II stretch occupies residues 62 to 134; the sequence is DEETLNLFLK…LKGKLVNDEL (73 aa). The tract at residues 134-137 is flexible linker; that stretch reads LDMQ. The segment at 138–186 is domain III; that stretch reads LLSDNSKDVAAALEALGYNKKEIAKSLKHVNFDQDLNKALKEALAILLK.

Belongs to the RuvA family. Homotetramer. Forms an RuvA(8)-RuvB(12)-Holliday junction (HJ) complex. HJ DNA is sandwiched between 2 RuvA tetramers; dsDNA enters through RuvA and exits via RuvB. An RuvB hexamer assembles on each DNA strand where it exits the tetramer. Each RuvB hexamer is contacted by two RuvA subunits (via domain III) on 2 adjacent RuvB subunits; this complex drives branch migration. In the full resolvosome a probable DNA-RuvA(4)-RuvB(12)-RuvC(2) complex forms which resolves the HJ.

Its subcellular location is the cytoplasm. Functionally, the RuvA-RuvB-RuvC complex processes Holliday junction (HJ) DNA during genetic recombination and DNA repair, while the RuvA-RuvB complex plays an important role in the rescue of blocked DNA replication forks via replication fork reversal (RFR). RuvA specifically binds to HJ cruciform DNA, conferring on it an open structure. The RuvB hexamer acts as an ATP-dependent pump, pulling dsDNA into and through the RuvAB complex. HJ branch migration allows RuvC to scan DNA until it finds its consensus sequence, where it cleaves and resolves the cruciform DNA. The protein is Holliday junction branch migration complex subunit RuvA of Acholeplasma laidlawii (strain PG-8A).